Reading from the N-terminus, the 414-residue chain is Serine hydroxymethyltransferase (414 aa).

Residues Leu121 and 125-127 (GHL) contribute to the (6S)-5,6,7,8-tetrahydrofolate site. Lys229 is subject to N6-(pyridoxal phosphate)lysine.

The protein belongs to the SHMT family. Homodimer. Requires pyridoxal 5'-phosphate as cofactor.

The protein localises to the cytoplasm. It carries out the reaction (6R)-5,10-methylene-5,6,7,8-tetrahydrofolate + glycine + H2O = (6S)-5,6,7,8-tetrahydrofolate + L-serine. Its pathway is one-carbon metabolism; tetrahydrofolate interconversion. The protein operates within amino-acid biosynthesis; glycine biosynthesis; glycine from L-serine: step 1/1. Its function is as follows. Catalyzes the reversible interconversion of serine and glycine with tetrahydrofolate (THF) serving as the one-carbon carrier. This reaction serves as the major source of one-carbon groups required for the biosynthesis of purines, thymidylate, methionine, and other important biomolecules. Also exhibits THF-independent aldolase activity toward beta-hydroxyamino acids, producing glycine and aldehydes, via a retro-aldol mechanism. In Variovorax paradoxus (strain S110), this protein is Serine hydroxymethyltransferase.